The following is a 273-amino-acid chain: Dermonecrotic toxin LapSicTox-alphaIB2 (273 aa).

Residue histidine 5 is part of the active site. The Mg(2+) site is built by glutamate 25 and aspartate 27. The Nucleophile role is filled by histidine 41. 2 disulfide bridges follow: cysteine 45/cysteine 51 and cysteine 47/cysteine 190. Aspartate 85 is a binding site for Mg(2+). A glycan (N-linked (GlcNAc...) asparagine) is linked at asparagine 250.

This sequence belongs to the arthropod phospholipase D family. Class II subfamily. Mg(2+) is required as a cofactor. In terms of tissue distribution, expressed by the venom gland.

It localises to the secreted. The enzyme catalyses an N-(acyl)-sphingosylphosphocholine = an N-(acyl)-sphingosyl-1,3-cyclic phosphate + choline. The catalysed reaction is an N-(acyl)-sphingosylphosphoethanolamine = an N-(acyl)-sphingosyl-1,3-cyclic phosphate + ethanolamine. It carries out the reaction a 1-acyl-sn-glycero-3-phosphocholine = a 1-acyl-sn-glycero-2,3-cyclic phosphate + choline. It catalyses the reaction a 1-acyl-sn-glycero-3-phosphoethanolamine = a 1-acyl-sn-glycero-2,3-cyclic phosphate + ethanolamine. Its function is as follows. Dermonecrotic toxins cleave the phosphodiester linkage between the phosphate and headgroup of certain phospholipids (sphingolipid and lysolipid substrates), forming an alcohol (often choline) and a cyclic phosphate. This toxin acts on sphingomyelin (SM). It may also act on ceramide phosphoethanolamine (CPE), lysophosphatidylcholine (LPC) and lysophosphatidylethanolamine (LPE), but not on lysophosphatidylserine (LPS), and lysophosphatidylglycerol (LPG). It acts by transphosphatidylation, releasing exclusively cyclic phosphate products as second products. Induces dermonecrosis, hemolysis, increased vascular permeability, edema, inflammatory response, and platelet aggregation. The protein is Dermonecrotic toxin LapSicTox-alphaIB2 of Loxosceles apachea (Apache recluse spider).